Here is a 406-residue protein sequence, read N- to C-terminus: uncharacterized protein (406 aa).

Transmembrane regions (helical) follow at residues 7 to 27, 31 to 51, 65 to 85, 92 to 112, and 191 to 211; these read LCTN…YYLF, YFNI…YGSV, LIFI…SEII, IFYF…SFIL, and ISLI…SSFF. Positions 259 to 331 are disordered; the sequence is TLNVPISTNN…TGTNNNVVDN (73 aa). Positions 262–291 are enriched in polar residues; it reads VPISTNNTDNLNSVKTNQQFNTPVAKSNTK. A compositionally biased stretch (basic residues) spans 292–303; it reads SNRRKKTGKKIR. Residues 306-318 are compositionally biased toward low complexity; that stretch reads NQTTSSNSSNNQS. Polar residues predominate over residues 319-330; that stretch reads PESTGTNNNVVD.

It localises to the membrane. This is an uncharacterized protein from Acanthamoeba polyphaga (Amoeba).